The chain runs to 182 residues: NADH-quinone oxidoreductase subunit I (182 aa).

4Fe-4S ferredoxin-type domains are found at residues 50–82 (IILS…LQKA) and 92–121 (EFFR…MTPD). The [4Fe-4S] cluster site is built by Cys-62, Cys-65, Cys-68, Cys-72, Cys-101, Cys-104, Cys-107, and Cys-111.

Belongs to the complex I 23 kDa subunit family. As to quaternary structure, NDH-1 is composed of 14 different subunits. Subunits NuoA, H, J, K, L, M, N constitute the membrane sector of the complex. [4Fe-4S] cluster serves as cofactor.

It is found in the cell inner membrane. It catalyses the reaction a quinone + NADH + 5 H(+)(in) = a quinol + NAD(+) + 4 H(+)(out). NDH-1 shuttles electrons from NADH, via FMN and iron-sulfur (Fe-S) centers, to quinones in the respiratory chain. The immediate electron acceptor for the enzyme in this species is believed to be ubiquinone. Couples the redox reaction to proton translocation (for every two electrons transferred, four hydrogen ions are translocated across the cytoplasmic membrane), and thus conserves the redox energy in a proton gradient. The chain is NADH-quinone oxidoreductase subunit I from Psychrobacter cryohalolentis (strain ATCC BAA-1226 / DSM 17306 / VKM B-2378 / K5).